The sequence spans 208 residues: Uracil phosphoribosyltransferase (208 aa).

Residues R78, R103, and 130-138 contribute to the 5-phospho-alpha-D-ribose 1-diphosphate site; that span reads DPMLATGGS. Uracil-binding positions include I193 and 198 to 200; that span reads GDA. A 5-phospho-alpha-D-ribose 1-diphosphate-binding site is contributed by D199.

The protein belongs to the UPRTase family. The cofactor is Mg(2+).

It catalyses the reaction UMP + diphosphate = 5-phospho-alpha-D-ribose 1-diphosphate + uracil. The protein operates within pyrimidine metabolism; UMP biosynthesis via salvage pathway; UMP from uracil: step 1/1. Allosterically activated by GTP. In terms of biological role, catalyzes the conversion of uracil and 5-phospho-alpha-D-ribose 1-diphosphate (PRPP) to UMP and diphosphate. The protein is Uracil phosphoribosyltransferase of Wolinella succinogenes (strain ATCC 29543 / DSM 1740 / CCUG 13145 / JCM 31913 / LMG 7466 / NCTC 11488 / FDC 602W) (Vibrio succinogenes).